We begin with the raw amino-acid sequence, 747 residues long: Mitochondrial inner membrane i-AAA protease supercomplex subunit YME1 (747 aa).

Basic and acidic residues predominate over residues 51–64 (KNSGEMPPKKEADS). Positions 51 to 92 (KNSGEMPPKKEADSSGKASNKSTISSIDNSQPPPPSNTNDKT) are disordered. A compositionally biased stretch (polar residues) spans 66–80 (GKASNKSTISSIDNS). 321–328 (GPPGTGKT) is a binding site for ATP. A Zn(2+)-binding site is contributed by His540. Residue Glu541 is part of the active site. Zn(2+)-binding residues include His544 and Asp618. The segment at 718–747 (STNTVVEGPDSDERKDIGDDKPKIPTMLNA) is disordered. Residues 728–740 (SDERKDIGDDKPK) are compositionally biased toward basic and acidic residues.

This sequence in the N-terminal section; belongs to the AAA ATPase family. The protein in the C-terminal section; belongs to the peptidase M41 family. In terms of assembly, component of the mitochondrial inner membrane i-AAA protease supercomplex composed of MGR1, MGR3 and YME1. Interacts directly with MGR1. Requires Zn(2+) as cofactor.

The protein resides in the mitochondrion inner membrane. Its function is as follows. Catalytic subunit of the mitochondrial inner membrane i-AAA protease supercomplex required for mitochondrial inner membrane protein turnover. The protease is probably ATP-dependent. Important to maintain the integrity of the mitochondrial compartment. Required both for the degradation of unassembled subunit 2 of cytochrome c oxidase (COX2) and for efficient assembly of mitochondrial respiratory chain. Binds unfolded substrates in an ATPase-independent manner; binding of folded COX2, a physiological substrate, requires an active ATPase but when COX2 is destabilized an active ATPase is no longer necessary. May process ATG32. In Saccharomyces cerevisiae (strain ATCC 204508 / S288c) (Baker's yeast), this protein is Mitochondrial inner membrane i-AAA protease supercomplex subunit YME1 (YME1).